The primary structure comprises 1026 residues: Multidrug resistance protein MdtC (1026 aa).

At 1–6 the chain is on the cytoplasmic side; that stretch reads MRFFAL. A helical transmembrane segment spans residues 7 to 29; the sequence is FIYRPVATILIAAAITLCGILGF. The Periplasmic segment spans residues 30–335; sequence RLLPVAPLPQ…TIRASLQEVE (306 aa). Residues 336-353 form a helical membrane-spanning segment; the sequence is ETLAISVALVILVVFLFL. Residues 354–359 are Cytoplasmic-facing; sequence RSGRAT. Residues 360–379 traverse the membrane as a helical segment; sequence LIPAVAVPVSLIGTFAAMYL. At 380–388 the chain is on the periplasmic side; sequence CGFSLNNLS. A helical membrane pass occupies residues 389–411; it reads LMALTIATGFVVDDAIVVLENIA. The Cytoplasmic segment spans residues 412–430; sequence RHLEARMKPLQAALQGTRE. The helical transmembrane segment at 431–453 threads the bilayer; that stretch reads VGFTVISMSLSLVAVFLPLLLMG. Over 454–467 the chain is Periplasmic; it reads GLPGRLLREFAVTL. A helical transmembrane segment spans residues 468-490; sequence SVAIGISLVVSLTLTPMMCGWML. Residues 491–852 lie on the Cytoplasmic side of the membrane; the sequence is KSSKPRTQPR…QVFQQTMNSQ (362 aa). A helical membrane pass occupies residues 853 to 875; that stretch reads LILIVAAIATVYIVLGILYESYV. Over 876-894 the chain is Periplasmic; it reads HPLTILSTLPSAGVGALLA. A helical membrane pass occupies residues 895-917; the sequence is LELFNAPFSLIALIGIMLLIGIV. Residues 918 to 947 lie on the Cytoplasmic side of the membrane; it reads KKNAIMMVDFALEAQRSGGLTPEQAIFQAC. A helical membrane pass occupies residues 948–970; it reads LLRFRPIMMTTLAALFGALPLVL. Residues 971 to 984 lie on the Periplasmic side of the membrane; that stretch reads SGGDGSELRQPLGI. A helical transmembrane segment spans residues 985-1007; sequence TIVGGLVMSQLLTLYTTPVVYLF. The Cytoplasmic segment spans residues 1008–1026; sequence FDRLRLRFSRKNSKPVVEI.

It belongs to the resistance-nodulation-cell division (RND) (TC 2.A.6) family. MdtC subfamily. Part of a tripartite efflux system composed of MdtA, MdtB and MdtC. MdtC forms a heteromultimer with MdtB.

The protein localises to the cell inner membrane. The polypeptide is Multidrug resistance protein MdtC (Salmonella typhi).